The sequence spans 2383 residues: Highly reducing polyketide synthase SAT13 (2383 aa).

Residues 6-433 (PVPLAIVGIA…GTNAHAVLER (428 aa)) form the Ketosynthase family 3 (KS3) domain. Catalysis depends on for beta-ketoacyl synthase activity residues C180, H315, and H355. Residues 536-828 (FIFTGQGAQW…IGPHSALAGP (293 aa)) form a malonyl-CoA:ACP transacylase (MAT) domain region. Residue S626 is the For malonyltransferase activity of the active site. Residues 922 to 1062 (HDLLGLRMTE…GNIVVVFKTS (141 aa)) are N-terminal hotdog fold. The tract at residues 922–1239 (HDLLGLRMTE…GMELRSFVAR (318 aa)) is dehydratase (DH) domain. The PKS/mFAS DH domain maps to 922–1242 (HDLLGLRMTE…LRSFVARDSN (321 aa)). The active-site Proton acceptor; for dehydratase activity is H954. The C-terminal hotdog fold stretch occupies residues 1087 to 1242 (GKLTHAGQLY…LRSFVARDSN (156 aa)). The active-site Proton donor; for dehydratase activity is the D1152. An enoylreductase (ER) domain region spans residues 1669–1977 (DGQNRLVFVE…KQGSMKKCVL (309 aa)). Residues 2001–2184 (ATYVVAGGLG…MSLNIGGIKD (184 aa)) form a catalytic ketoreductase (KRc) domain region. In terms of domain architecture, Carrier spans 2287-2364 (EISEFVARSI…DLAQKVVSRS (78 aa)). S2324 is subject to O-(pantetheine 4'-phosphoryl)serine.

It functions in the pathway mycotoxin biosynthesis. Its function is as follows. Highly reducing polyketide synthase; part of the satratoxin SC2 cluster involved in the biosynthesis of satratoxins, trichothecene mycotoxins that are associated with human food poisonings. Satratoxins are suggested to be made by products of multiple gene clusters (SC1, SC2 and SC3) that encode 21 proteins in all, including polyketide synthases, acetyltransferases, and other enzymes expected to modify the trichothecene skeleton. SC1 encodes 10 proteins, SAT1 to SAT10. The largest are SAT8, which encodes a putative polyketide synthase (PKS) with a conventional non-reducing architecture, and SAT10, a putative protein containing four ankyrin repeats and thus may be involved in protein scaffolding. The putative short-chain reductase SAT3 may assist the PKS in some capacity. SAT6 contains a secretory lipase domain and acts probably as a trichothecene esterase. SAT5 encodes a putative acetyltransferase, and so, with SAT6, may affect endogenous protection from toxicity. The probable transcription factor SAT9 may regulate the expression of the SC1 cluster. SC2 encodes proteins SAT11 to SAT16, the largest of which encodes the putative reducing PKS SAT13. SAT11 is a cytochrome P450 monooxygenase, while SAT14 and SAT16 are probable acetyltransferases. The SC2 cluster may be regulated by the transcription factor SAT15. SC3 is a small cluster that encodes 5 proteins, SAT17 to SAT21. SAT21 is a putative MFS-type transporter which may have a role in exporting secondary metabolites. The four other proteins putatively encoded in SC3 include the taurine hydroxylase-like protein SAT17, the O-methyltransferase SAT18, the acetyltransferase SAT19, and the Cys6-type zinc finger SAT20, the latter being probably involved in regulation of SC3 expression. The sequence is that of Highly reducing polyketide synthase SAT13 from Stachybotrys chartarum (strain CBS 109288 / IBT 7711) (Toxic black mold).